Consider the following 427-residue polypeptide: Gamma-glutamyl phosphate reductase (427 aa).

This sequence belongs to the gamma-glutamyl phosphate reductase family.

It is found in the cytoplasm. The enzyme catalyses L-glutamate 5-semialdehyde + phosphate + NADP(+) = L-glutamyl 5-phosphate + NADPH + H(+). The protein operates within amino-acid biosynthesis; L-proline biosynthesis; L-glutamate 5-semialdehyde from L-glutamate: step 2/2. Catalyzes the NADPH-dependent reduction of L-glutamate 5-phosphate into L-glutamate 5-semialdehyde and phosphate. The product spontaneously undergoes cyclization to form 1-pyrroline-5-carboxylate. The polypeptide is Gamma-glutamyl phosphate reductase (Rhizobium etli (strain ATCC 51251 / DSM 11541 / JCM 21823 / NBRC 15573 / CFN 42)).